A 130-amino-acid chain; its full sequence is Small ribosomal subunit protein uS8 (130 aa).

The protein belongs to the universal ribosomal protein uS8 family. In terms of assembly, part of the 30S ribosomal subunit.

One of the primary rRNA binding proteins, it binds directly to 16S rRNA central domain where it helps coordinate assembly of the platform of the 30S subunit. This Thermococcus sibiricus (strain DSM 12597 / MM 739) protein is Small ribosomal subunit protein uS8.